The following is a 521-amino-acid chain: Cytochrome P450 monooxygenase ABA2 (521 aa).

Residues 15–35 (AGHLGMAVTFTILVAFTIHVL) form a helical membrane-spanning segment. Residue Asn366 is glycosylated (N-linked (GlcNAc...) asparagine). Cys458 serves as a coordination point for heme.

Belongs to the cytochrome P450 family. It depends on heme as a cofactor.

The protein resides in the membrane. It functions in the pathway hormone biosynthesis. In terms of biological role, cytochrome P450 monooxygenase involved in the biosynthesis of abscisic acid (ABA), a phytohormone that acts antagonistically toward salicylic acid (SA), jasmonic acid (JA) and ethylene (ETH) signaling, to impede plant defense responses. During pathogen-host interaction, ABA plays a dual role in disease severity by increasing plant susceptibility and accelerating pathogenesis in the fungus itself. The first step of the pathway catalyzes the reaction from farnesyl diphosphate to alpha-ionylideneethane performed by the alpha-ionylideneethane synthase ABA3 via a three-step reaction mechanism involving 2 neutral intermediates, beta-farnesene and allofarnesene. The cytochrome P450 monooxygenase ABA1 might then be involved in the conversion of alpha-ionylideneethane to alpha-ionylideneacetic acid. Alpha-ionylideneacetic acid is further converted to abscisic acid in 2 steps involving the cytochrome P450 monooxygenase ABA2 and the short-chain dehydrogenase/reductase ABA4, via the intermediates 1'-deoxy-ABA or 1',4'-trans-diol-ABA, depending on the order of action of these 2 enzymes. ABA2 is responsible for the hydroxylation of carbon atom C-1' and ABA4 might be involved in the oxidation of the C-4' carbon atom. The polypeptide is Cytochrome P450 monooxygenase ABA2 (Pyricularia oryzae (strain 70-15 / ATCC MYA-4617 / FGSC 8958) (Rice blast fungus)).